The sequence spans 240 residues: MNNTIETILAHRSIRKFTAVPITDEQRQTIIQAGLAASSSSMLQVVSIVRVTDSEKRNELAQFAGNQAYVESAAEFLVFCIDYQRHATINPDVQADFTELTLIGAVDSGIMAQNCLLAAESMGLGGVYIGGLRNSAAQVDELLGLPENSAVLFGMCLGHPDQNPEVKPRLPAHVVVHENQYQELNLDDIQSYDQTMQAYYASRTSNQKLSTWSQEVTGKLAGESRPHILPYLNSKGLAKR.

FMN contacts are provided by residues 11 to 15 (HRSIR), Ser-39, 67 to 69 (QAY), 128 to 131 (YIGG), and 167 to 169 (KPR).

This sequence belongs to the flavin oxidoreductase frp family. As to quaternary structure, homodimer.

The enzyme catalyses FMNH2 + NADP(+) = FMN + NADPH + 2 H(+). Functionally, catalyzes the NADPH-dependent reduction of FMN to FMNH(2). Involved in bioluminescence by providing FMNH(2) to luciferase. The chain is NADPH-flavin oxidoreductase from Vibrio harveyi (Beneckea harveyi).